The primary structure comprises 360 residues: Biotin synthase (360 aa).

The region spanning 83–315 (FCGKYFDLCT…KSFLRYCGGR (233 aa)) is the Radical SAM core domain. The [4Fe-4S] cluster site is built by Cys101, Cys105, and Cys108. [2Fe-2S] cluster contacts are provided by Ser145, Cys180, Cys240, and Arg310.

This sequence belongs to the radical SAM superfamily. Biotin synthase family. Homodimer. [4Fe-4S] cluster serves as cofactor. It depends on [2Fe-2S] cluster as a cofactor.

It carries out the reaction (4R,5S)-dethiobiotin + (sulfur carrier)-SH + 2 reduced [2Fe-2S]-[ferredoxin] + 2 S-adenosyl-L-methionine = (sulfur carrier)-H + biotin + 2 5'-deoxyadenosine + 2 L-methionine + 2 oxidized [2Fe-2S]-[ferredoxin]. The protein operates within cofactor biosynthesis; biotin biosynthesis; biotin from 7,8-diaminononanoate: step 2/2. Its function is as follows. Catalyzes the conversion of dethiobiotin (DTB) to biotin by the insertion of a sulfur atom into dethiobiotin via a radical-based mechanism. This Fusobacterium nucleatum subsp. nucleatum (strain ATCC 25586 / DSM 15643 / BCRC 10681 / CIP 101130 / JCM 8532 / KCTC 2640 / LMG 13131 / VPI 4355) protein is Biotin synthase.